A 369-amino-acid polypeptide reads, in one-letter code: MSDLEQLERQILEDIAAAVDEQGIEAVRVAALGKKGTVSEKLKTLGGMSPEERQMQGPAINGLKNRVTEALSERRTELRKAAVAARLEREKVDVTLPVRESAASRGRIHPISQVIDEITAIFADMGFSIAEGPDIETDYYNFTALNFPEGHPAREMHDTFFFNPDEKGERKLLRTHTSPVQVHTMEKFAAMRDKEGRDEPIRIVIPGKTYRMDSDATHSPMFHQVEGLVVDKSANVVNMKWVLEEFCKAFFEVPSVKMRMRPSFFPFTEPSVEVDIQCDRSGPHVKFGEGNDWLEILGCGMVHPNVLRMSGYDPEVYQGFAWGMGIDRIAMLKYGMPDLRAFFDADVRWIEHYGFRPLDIPTLFGGLSA.

Glu269 is a binding site for Mg(2+).

Belongs to the class-II aminoacyl-tRNA synthetase family. Phe-tRNA synthetase alpha subunit type 1 subfamily. As to quaternary structure, tetramer of two alpha and two beta subunits. It depends on Mg(2+) as a cofactor.

It localises to the cytoplasm. It catalyses the reaction tRNA(Phe) + L-phenylalanine + ATP = L-phenylalanyl-tRNA(Phe) + AMP + diphosphate + H(+). In Brucella ovis (strain ATCC 25840 / 63/290 / NCTC 10512), this protein is Phenylalanine--tRNA ligase alpha subunit.